We begin with the raw amino-acid sequence, 158 residues long: Hypoxanthine DNA glycosylase (158 aa).

The active site involves asparagine 39.

It belongs to the uracil-DNA glycosylase (UDG) superfamily. Type 6 (HDG) family.

Its function is as follows. Excises hypoxanthine, a deamination product of adenine, from double-stranded DNA. Acts on double-stranded DNA containing G/I, T/I, A/I and C/I base pairs, but not on single-stranded inosine-containing DNA. Also has minor xanthine DNA glycosylase activity. Lacks any detectable uracil-DNA glycosylase activity. The chain is Hypoxanthine DNA glycosylase from Methanosarcina barkeri (strain Fusaro / DSM 804).